The primary structure comprises 675 residues: Mitochondrial distribution and morphology protein 12 (675 aa).

Positions 1–675 (MSIDLNWDTV…VYPSFWTFLV (675 aa)) constitute an SMP-LTD domain. Disordered stretches follow at residues 66 to 186 (LPDF…GTNH), 241 to 270 (GPSW…GAGG), 307 to 327 (GTGK…PLGT), 365 to 390 (TGPR…VAPA), and 444 to 517 (PKQG…RFRE). The span at 78 to 101 (SSEESDSEEEVAYENEGEYLDDPV) shows a compositional bias: acidic residues. Over residues 123–137 (NSSTGSRNGSGPNSG) the composition is skewed to low complexity. Residues 261–270 (GGAGGGGAGG) are compositionally biased toward gly residues. The segment covering 317–327 (PLTGTSTPLGT) has biased composition (low complexity). 2 stretches are compositionally biased toward polar residues: residues 373–382 (PSSQSLNSVG) and 454–469 (VSTL…NNRA). Over residues 497 to 510 (EPEEDEEEEEEGEE) the composition is skewed to acidic residues.

This sequence belongs to the MDM12 family. Component of the ER-mitochondria encounter structure (ERMES) or MDM complex, composed of mmm-1, mdm10, mdm12 and mdm34. A mmm-1 homodimer associates with one molecule of mdm12 on each side in a pairwise head-to-tail manner, and the SMP-LTD domains of mmm-1 and mdm12 generate a continuous hydrophobic tunnel for phospholipid trafficking.

Its subcellular location is the mitochondrion outer membrane. The protein localises to the endoplasmic reticulum membrane. Functionally, component of the ERMES/MDM complex, which serves as a molecular tether to connect the endoplasmic reticulum (ER) and mitochondria. Components of this complex are involved in the control of mitochondrial shape and protein biogenesis, and function in nonvesicular lipid trafficking between the ER and mitochondria. Mdm12 is required for the interaction of the ER-resident membrane protein MMM1 and the outer mitochondrial membrane-resident beta-barrel protein mdm10. The mdm12-mmm-1 subcomplex functions in the major beta-barrel assembly pathway that is responsible for biogenesis of all mitochondrial outer membrane beta-barrel proteins, and acts in a late step after the SAM complex. The mdm10-mdm12-mmm-1 subcomplex further acts in the TOM40-specific pathway after the action of the mdm12-mmm1 complex. Essential for establishing and maintaining the structure of mitochondria and maintenance of mtDNA nucleoids. This chain is Mitochondrial distribution and morphology protein 12, found in Neurospora crassa (strain ATCC 24698 / 74-OR23-1A / CBS 708.71 / DSM 1257 / FGSC 987).